The following is a 194-amino-acid chain: Lectin-C (194 aa).

An N-terminal signal peptide occupies residues 1-26; the sequence is MKRSNSIAVMLVLVLSSLMLLLPVEG. The propeptide at 27–44 is removed in mature form; the sequence is QGHEGHGVGEILLMGKLG. Chitin-binding type-1 domains are found at residues 45 to 86, 87 to 127, and 128 to 168; these read APVC…QCDY, NRCG…QCSY, and WRCG…QCDL. Disulfide bonds link cysteine 48–cysteine 63, cysteine 57–cysteine 69, cysteine 62–cysteine 76, cysteine 80–cysteine 84, cysteine 89–cysteine 104, cysteine 98–cysteine 110, cysteine 103–cysteine 117, cysteine 121–cysteine 125, cysteine 130–cysteine 145, cysteine 139–cysteine 151, cysteine 144–cysteine 158, and cysteine 162–cysteine 166. The propeptide at 171-194 is removed in mature form; that stretch reads LLPSPLRRIIAIRKLKANLANMLS.

In terms of assembly, homodimer. The homodimers are asymmetric; formed in a 'head-to-tail' fashion via hydrophobic interactions between aromatic residues of the carbohydrate-binding sites of each subunit.

In terms of biological role, N-acetyl-D-glucosamine binding lectin. Almost no hemagglutinating activity towards human erythrocytes. Low mitogenic activity towards human peripheral blood lymphocytes. This Phytolacca americana (American pokeweed) protein is Lectin-C.